We begin with the raw amino-acid sequence, 301 residues long: Phosphoglycolate phosphatase 2 (301 aa).

The Nucleophile role is filled by D19.

The protein belongs to the HAD-like hydrolase superfamily. CbbY/CbbZ/Gph/YieH family.

The enzyme catalyses 2-phosphoglycolate + H2O = glycolate + phosphate. Its function is as follows. Dephosphorylates 2-phosphoglycolate, but does not contribute to photorespiratory metabolism. This chain is Phosphoglycolate phosphatase 2 (PGLP2), found in Arabidopsis thaliana (Mouse-ear cress).